Reading from the N-terminus, the 333-residue chain is Adenosine deaminase (333 aa).

Residues histidine 12 and histidine 14 each coordinate Zn(2+). Substrate-binding residues include histidine 14, aspartate 16, and glycine 170. Histidine 197 is a binding site for Zn(2+). Glutamate 200 (proton donor) is an active-site residue. Residue aspartate 278 participates in Zn(2+) binding. Aspartate 279 provides a ligand contact to substrate.

Belongs to the metallo-dependent hydrolases superfamily. Adenosine and AMP deaminases family. Adenosine deaminase subfamily. The cofactor is Zn(2+).

The catalysed reaction is adenosine + H2O + H(+) = inosine + NH4(+). It carries out the reaction 2'-deoxyadenosine + H2O + H(+) = 2'-deoxyinosine + NH4(+). Its function is as follows. Catalyzes the hydrolytic deamination of adenosine and 2-deoxyadenosine. In Salmonella agona (strain SL483), this protein is Adenosine deaminase.